The primary structure comprises 648 residues: Leucine-rich repeat and WD repeat-containing protein 1 (648 aa).

LRR repeat units lie at residues 22–43 (KIQS…PNLL), 48–69 (KLRE…LGLS), 70–91 (HLRI…HQFP), and 92–113 (ELEE…LKVS). A disordered region spans residues 214–262 (VEHPQAAGASKFRAREVASKRPGKDPVTLPPSKRVRALPPAQAEGSPMG). The span at 226–237 (RAREVASKRPGK) shows a compositional bias: basic and acidic residues. Ser-259 is modified (phosphoserine). 5 WD repeats span residues 392–432 (AHKK…QDYK), 443–482 (CGSV…PQKQ), 497–536 (VSGQ…AGRG), 541–592 (LPVV…KEPP), and 616–648 (VTKT…WRRC).

Belongs to the LRWD1 family. In terms of assembly, integral component of the ORC complex. Directly interacts with CDT1, GMNN and ORC2. Interacts with ORC2 only when non-ubiquitinated; this interaction prevents LRWD1 ubiquitination and degradation. Some of these interactions are regulated in a cell-cycle dependent manner. Interaction with ORC1 occurs predominantly during G1. Association with phosphorylated ORC1 during mitosis is not efficient. Interaction with CDT1 occurs during G1 phase, as well as during mitosis with phosphorylated CDT1. Interaction with GMNN occurs from G1/S to mitosis. Interaction with ORC2 is observed throughout the cell cycle. The stoichiometry of the ORCA/ORC/CDT1/GMNN complex is 1:1:1:2. Interacts with CUL4A and DDB1; this interaction may lead to ubiquitination. Ubiquitinated; undergoes 'Lys-48'-linked polyubiquitination leading to proteasomal degradation. Ubiquitination occurs within the WD repeats at the end of the G1 phase. Ubiquitination may be catalyzed by the CUL4-DDB1 E3 ubiquitin-protein ligase complex and other E3 ligases. As to expression, testis-specific.

It is found in the nucleus. It localises to the chromosome. The protein localises to the centromere. The protein resides in the telomere. Its subcellular location is the cytoplasm. It is found in the cytoskeleton. It localises to the microtubule organizing center. The protein localises to the centrosome. The protein resides in the kinetochore. Required for G1/S transition. Recruits and stabilizes the origin recognition complex (ORC) onto chromatin during G1 to establish pre-replication complex (preRC) and to heterochromatic sites in post-replicated cells. Binds a combination of DNA and histone methylation repressive marks on heterochromatin. Binds histone H3 and H4 trimethylation marks H3K9me3, H3K27me3 and H4K20me3 in a cooperative manner with DNA methylation. Required for silencing of major satellite repeats. May be important ORC2, ORC3 and ORC4 stability. This is Leucine-rich repeat and WD repeat-containing protein 1 (LRWD1) from Mus musculus (Mouse).